We begin with the raw amino-acid sequence, 342 residues long: L-threonine 3-dehydrogenase (342 aa).

Cysteine 38 contributes to the Zn(2+) binding site. Residues threonine 40 and histidine 43 each act as charge relay system in the active site. 6 residues coordinate Zn(2+): histidine 63, glutamate 64, cysteine 93, cysteine 96, cysteine 99, and cysteine 107. NAD(+) is bound by residues isoleucine 175, aspartate 195, arginine 200, 262–264 (LGI), and 286–287 (IY).

Belongs to the zinc-containing alcohol dehydrogenase family. As to quaternary structure, homotetramer. Zn(2+) serves as cofactor.

The protein localises to the cytoplasm. The catalysed reaction is L-threonine + NAD(+) = (2S)-2-amino-3-oxobutanoate + NADH + H(+). It participates in amino-acid degradation; L-threonine degradation via oxydo-reductase pathway; glycine from L-threonine: step 1/2. Its function is as follows. Catalyzes the NAD(+)-dependent oxidation of L-threonine to 2-amino-3-ketobutyrate. In Burkholderia ambifaria (strain ATCC BAA-244 / DSM 16087 / CCUG 44356 / LMG 19182 / AMMD) (Burkholderia cepacia (strain AMMD)), this protein is L-threonine 3-dehydrogenase.